The primary structure comprises 488 residues: Ribulose bisphosphate carboxylase large chain 1 (488 aa).

Residues N128 and T178 each contribute to the substrate site. K180 functions as the Proton acceptor in the catalytic mechanism. Position 182 (K182) interacts with substrate. 3 residues coordinate Mg(2+): K206, D208, and E209. At K206 the chain carries N6-carboxylysine. The active-site Proton acceptor is the H298. R299, H331, and S383 together coordinate substrate.

The protein belongs to the RuBisCO large chain family. Type I subfamily. In terms of assembly, heterohexadecamer of 8 large chains and 8 small chains. Mg(2+) is required as a cofactor.

The catalysed reaction is 2 (2R)-3-phosphoglycerate + 2 H(+) = D-ribulose 1,5-bisphosphate + CO2 + H2O. It catalyses the reaction D-ribulose 1,5-bisphosphate + O2 = 2-phosphoglycolate + (2R)-3-phosphoglycerate + 2 H(+). Functionally, ruBisCO catalyzes two reactions: the carboxylation of D-ribulose 1,5-bisphosphate, the primary event in carbon dioxide fixation, as well as the oxidative fragmentation of the pentose substrate. Both reactions occur simultaneously and in competition at the same active site. The protein is Ribulose bisphosphate carboxylase large chain 1 of Nitrobacter hamburgensis (strain DSM 10229 / NCIMB 13809 / X14).